A 365-amino-acid polypeptide reads, in one-letter code: Chorismate synthase (365 aa).

Arg48 and Arg54 together coordinate NADP(+). FMN contacts are provided by residues 125 to 127 (RSS), 237 to 238 (NA), Gly277, 292 to 296 (KPTSS), and Arg318.

Belongs to the chorismate synthase family. Homotetramer. FMNH2 is required as a cofactor.

It catalyses the reaction 5-O-(1-carboxyvinyl)-3-phosphoshikimate = chorismate + phosphate. It participates in metabolic intermediate biosynthesis; chorismate biosynthesis; chorismate from D-erythrose 4-phosphate and phosphoenolpyruvate: step 7/7. Functionally, catalyzes the anti-1,4-elimination of the C-3 phosphate and the C-6 proR hydrogen from 5-enolpyruvylshikimate-3-phosphate (EPSP) to yield chorismate, which is the branch point compound that serves as the starting substrate for the three terminal pathways of aromatic amino acid biosynthesis. This reaction introduces a second double bond into the aromatic ring system. This chain is Chorismate synthase, found in Verminephrobacter eiseniae (strain EF01-2).